A 330-amino-acid chain; its full sequence is Stearoyl-CoA desaturase 5 (330 aa).

The Cytoplasmic segment spans residues M1–N49. N49 contacts substrate. Residues V50–A70 form a helical membrane-spanning segment. At K71–P72 the chain is on the lumenal side. Residues L73–A93 traverse the membrane as a helical segment. Residues H94 and H99 each coordinate Fe cation. The Histidine box-1 signature appears at H94–H99. The Cytoplasmic portion of the chain corresponds to H94 to K193. The substrate site is built by N122, R129, and D130. The Fe cation site is built by H131, H134, and H135. The Histidine box-2 motif lies at H131 to H135. The substrate site is built by R162 and K163. A helical membrane pass occupies residues I194 to E214. Residue S215 is a topological domain, lumenal. The helical transmembrane segment at L216–V238 threads the bilayer. W236 lines the substrate pocket. At N239–A330 the chain is on the cytoplasmic side. Fe cation is bound by residues H243, H272, H275, and H276. Residues H272–H276 carry the Histidine box-3 motif.

It belongs to the fatty acid desaturase type 1 family. In terms of assembly, may self-associate and form homodimers. Requires Fe(2+) as cofactor. Detected in fetal brain, and at lower levels in fetal kidney. Detected in adult brain and pancreas, and at lower levels in kidney and lung. Expressed in spiral ganglion cells and the organ of Corti of fetal cochlea.

The protein localises to the endoplasmic reticulum membrane. The catalysed reaction is octadecanoyl-CoA + 2 Fe(II)-[cytochrome b5] + O2 + 2 H(+) = (9Z)-octadecenoyl-CoA + 2 Fe(III)-[cytochrome b5] + 2 H2O. It catalyses the reaction hexadecanoyl-CoA + 2 Fe(II)-[cytochrome b5] + O2 + 2 H(+) = (9Z)-hexadecenoyl-CoA + 2 Fe(III)-[cytochrome b5] + 2 H2O. Functionally, stearoyl-CoA desaturase that utilizes O(2) and electrons from reduced cytochrome b5 to introduce the first double bond into saturated fatty acyl-CoA substrates. Catalyzes the insertion of a cis double bond at the delta-9 position into fatty acyl-CoA substrates including palmitoyl-CoA and stearoyl-CoA. Gives rise to a mixture of 16:1 and 18:1 unsaturated fatty acids. Involved in neuronal cell proliferation and differentiation through down-regulation of EGFR/AKT/MAPK and Wnt signaling pathways. The polypeptide is Stearoyl-CoA desaturase 5 (SCD5) (Homo sapiens (Human)).